Consider the following 393-residue polypeptide: Putative bacilysin exporter BacE (393 aa).

A run of 10 helical transmembrane segments spans residues 11–31 (LLFG…ALLI), 43–63 (SGVI…GVLV), 69–89 (VKIM…LTFL), 92–112 (GEYP…GVFF), 133–155 (LFAK…FLLG), 160–177 (LAVA…FFIS), 215–235 (MFTM…FPIV), 244–264 (IGNF…AALV), 287–307 (ALFL…LFFI), and 353–373 (IVDA…LFLH).

The protein belongs to the major facilitator superfamily.

The protein resides in the cell membrane. Its function is as follows. Part of the bacilysin biosynthesis operon. May be involved in self-resistance to bacilysin by permitting efflux of this antibiotic. The polypeptide is Putative bacilysin exporter BacE (bacE) (Bacillus subtilis).